Here is a 535-residue protein sequence, read N- to C-terminus: MSTKYIFVTGGGTSSMGKGIVAASLGRLLKNRGLKVTVQKFDPYLNIDPGTMSPYQHGEVFVTDDGAETDLDLGHYERFIDINLNKYSNVTSGKVYSEILRKERKGEYLGATVQMVPHVTNMLKEKIKRAATTTDADIIITEVGGTVGDMESLPFIEALRQMKAEVGADNVMYIHTVPILHLRAAGELKTKIAQNATKTLREYGIQANMLVLRSEVPITTEMRDKIAMFCDVAPEAVIQSLDVEHLYQIPLNLQAQNMDQIVCDHLKLDAPKADMAEWSAMVDHVMNLKKKVKIALVGKYVELPDAYISVTEALKHAGYASDAEVDINWVNANDVTDENVAELVGDAAGIIVPGGFGQRGTEGKIAAIKYARENDVPMLGICLGMQLTAVEFARNVLGLEGAHSFELDPETKYPVIDIMRDQVDVEDMGGTLRLGLYPAKLKNGSRAKAAYNDAEVVQRRHRHRYEFNNKYREDFEKAGFVFSGVSPDNRLVEIVELSGKKFFVACQYHPELQSRPNRPEELYTEFIRVAVENSK.

Residues 1-268 (MSTKYIFVTG…DQIVCDHLKL (268 aa)) form an amidoligase domain region. CTP is bound at residue Ser14. Ser14 is a binding site for UTP. 15-20 (SMGKGI) provides a ligand contact to ATP. Residue Tyr55 coordinates L-glutamine. Residue Asp72 coordinates ATP. Positions 72 and 142 each coordinate Mg(2+). Residues 149 to 151 (DME), 189 to 194 (KTKIAQ), and Lys225 contribute to the CTP site. Residues 189–194 (KTKIAQ) and Lys225 contribute to the UTP site. Val243 is a binding site for ATP. Positions 293 to 535 (KIALVGKYVE…FIRVAVENSK (243 aa)) constitute a Glutamine amidotransferase type-1 domain. An L-glutamine-binding site is contributed by Gly355. Catalysis depends on Cys382, which acts as the Nucleophile; for glutamine hydrolysis. L-glutamine contacts are provided by residues 383-386 (LGMQ), Glu406, and Arg464. Residues His509 and Glu511 contribute to the active site.

Belongs to the CTP synthase family. In terms of assembly, homotetramer. In contrast to E.coli CTP synthase, remains a tetramer at dilute enzyme concentrations even in the absence of Mg(2+), ATP and UTP.

The enzyme catalyses UTP + L-glutamine + ATP + H2O = CTP + L-glutamate + ADP + phosphate + 2 H(+). It carries out the reaction L-glutamine + H2O = L-glutamate + NH4(+). The catalysed reaction is UTP + NH4(+) + ATP = CTP + ADP + phosphate + 2 H(+). It participates in pyrimidine metabolism; CTP biosynthesis via de novo pathway; CTP from UDP: step 2/2. With respect to regulation, allosterically activated by GTP, when glutamine is the substrate. GTP has no effect on the reaction when ammonia is the substrate. The allosteric effector GTP functions by stabilizing the protein conformation that binds the tetrahedral intermediate(s) formed during glutamine hydrolysis. Also activated by magnesium. Allosterically inhibited by CTP. Catalyzes the ATP-dependent amination of UTP to CTP with either L-glutamine or ammonia as the source of nitrogen. Is essential for the synthesis of CTP de novo. Contrary to other bacterial CTP synthases, the lactococcal enzyme is also able to convert dUTP to dCTP, but this reaction may not play a significant physiological role. Regulates intracellular CTP levels through interactions with the four ribonucleotide triphosphates. In Lactococcus lactis subsp. cremoris (strain MG1363), this protein is CTP synthase.